Consider the following 190-residue polypeptide: Cytoglobin (190 aa).

The region spanning 18–167 (ELSEAERKAV…IYSHVTAAYK (150 aa)) is the Globin domain. A disulfide bridge links Cys-38 with Cys-83. His-81 and His-113 together coordinate heme b.

It belongs to the globin family. Monomeric. Homodimer; disulfide-linked in vitro. Also homooligomeric in vitro. The formation of an intramolecular disulfide bond between cysteines Cys-38 and Cys-83 specifically enhances the nitrite reductase activity. In terms of tissue distribution, widely expressed. Highest expression in heart, stomach, bladder and small intestine.

It is found in the cytoplasm. It localises to the nucleus. The catalysed reaction is Fe(II)-heme b-[protein] + nitric oxide + O2 = Fe(III)-heme b-[protein] + nitrate. It carries out the reaction Fe(III)-heme b-[protein] + nitric oxide + H2O = Fe(II)-heme b-[protein] + nitrite + 2 H(+). It catalyses the reaction 2 superoxide + 2 H(+) = H2O2 + O2. The enzyme catalyses H2O2 + AH2 = A + 2 H2O. The nitric oxide dioxygenase activity is activated by a reducing system composed of cytochrome b5, its upstream reductase CYB5R3 and NADH. Probable multifunctional globin with a hexacoordinated heme iron required for the catalysis of various reactions depending on redox condition of the cell as well as oxygen availability. Has a nitric oxide dioxygenase (NOD) activity and is most probably involved in cell-mediated and oxygen-dependent nitric oxide consumption. By scavenging this second messenger may regulate several biological processes including endothelium-mediated vasodilation and vascular tone. Under normoxic conditions functions as a nitric oxide dioxygenase (NOD) but under hypoxic conditions the globin may switch its function to that of a nitrite (NO2) reductase (NiR), generating nitric oxide. Could also have peroxidase and superoxide dismutase activities, detoxifying reactive oxygen species and protecting cells against oxidative stress. Also binds dioxygen with low affinity and could function as an oxygen sensor but has probably no function as a respiratory oxygen carrier. The chain is Cytoglobin from Homo sapiens (Human).